The chain runs to 130 residues: MRHRHGLRKLNRTSSHRLAMLRNMSNSLIEHEVIKTTLPKAKELRKVVEPLITLGKKPSLANRRLAFNRLRDRDSVTKLFEVLGPRYATRPGGYLRVLKFGFRVGDNAPMALVELLDRPEVEEVEVQEAE.

It belongs to the bacterial ribosomal protein bL17 family. In terms of assembly, part of the 50S ribosomal subunit. Contacts protein L32.

In Paraburkholderia xenovorans (strain LB400), this protein is Large ribosomal subunit protein bL17.